The chain runs to 138 residues: Putative pre-16S rRNA nuclease (138 aa).

This sequence belongs to the YqgF nuclease family.

The protein localises to the cytoplasm. In terms of biological role, could be a nuclease involved in processing of the 5'-end of pre-16S rRNA. In Listeria monocytogenes serotype 4b (strain CLIP80459), this protein is Putative pre-16S rRNA nuclease.